A 245-amino-acid chain; its full sequence is Adenosylcobinamide-GDP ribazoletransferase (245 aa).

A run of 6 helical transmembrane segments spans residues 35–55, 108–128, 137–157, 176–196, 197–217, and 222–242; these read WFPL…ALGL, IGAF…IGAH, GVLI…AALV, IAIG…TPVM, TTVT…HLAR, and INGD…LLAA.

This sequence belongs to the CobS family. The cofactor is Mg(2+).

The protein resides in the cell inner membrane. The catalysed reaction is alpha-ribazole + adenosylcob(III)inamide-GDP = adenosylcob(III)alamin + GMP + H(+). It catalyses the reaction alpha-ribazole 5'-phosphate + adenosylcob(III)inamide-GDP = adenosylcob(III)alamin 5'-phosphate + GMP + H(+). The protein operates within cofactor biosynthesis; adenosylcobalamin biosynthesis; adenosylcobalamin from cob(II)yrinate a,c-diamide: step 7/7. Its function is as follows. Joins adenosylcobinamide-GDP and alpha-ribazole to generate adenosylcobalamin (Ado-cobalamin). Also synthesizes adenosylcobalamin 5'-phosphate from adenosylcobinamide-GDP and alpha-ribazole 5'-phosphate. The protein is Adenosylcobinamide-GDP ribazoletransferase of Nitratidesulfovibrio vulgaris (strain DP4) (Desulfovibrio vulgaris).